Consider the following 112-residue polypeptide: MCQNIFQKIIKGIIPSKIIYQDKEITAFHDINPIAPIHILVVPNLLIKSLNEINENNKHILGNMLYISIKIAKKFKIDKNGYRLIINCNQHGRQEIQHLHLHLLGGKKLNKI.

An HIT domain is found at 5-112 (IFQKIIKGII…LLGGKKLNKI (108 aa)). A Histidine triad motif motif is present at residues 98 to 102 (HLHLH).

This is an uncharacterized protein from Buchnera aphidicola subsp. Baizongia pistaciae (strain Bp).